We begin with the raw amino-acid sequence, 356 residues long: tRNA-specific 2-thiouridylase MnmA 1 (356 aa).

ATP contacts are provided by residues 8 to 15 (GMSGGVDS) and Met-34. Cys-103 (nucleophile) is an active-site residue. Residues Cys-103 and Cys-199 are joined by a disulfide bond. Gly-127 is an ATP binding site. The segment at 149 to 151 (KDQ) is interaction with tRNA. The active-site Cysteine persulfide intermediate is Cys-199. The interval 305 to 306 (RY) is interaction with tRNA.

Belongs to the MnmA/TRMU family.

The protein resides in the cytoplasm. It catalyses the reaction S-sulfanyl-L-cysteinyl-[protein] + uridine(34) in tRNA + AH2 + ATP = 2-thiouridine(34) in tRNA + L-cysteinyl-[protein] + A + AMP + diphosphate + H(+). In terms of biological role, catalyzes the 2-thiolation of uridine at the wobble position (U34) of tRNA, leading to the formation of s(2)U34. This Clostridium botulinum (strain ATCC 19397 / Type A) protein is tRNA-specific 2-thiouridylase MnmA 1.